A 308-amino-acid chain; its full sequence is MGFKGYILSIVFNGKDFANKYYLMLKEFLKQHNLRDKIALKVVLANDEPASNLYVSIKSRVAKEIGLNVEVIKFSANSVQSDILEVIDRENKNLSTDGIIVQLPLLKGMDLNSILNSIVYSKDVDGLSFVNLGKMILGDKKGFIPCTALAVLKILRDEGIKTLGKTVVVVGRSPLVGRPISILLSSKPYDATVIACHSKSIYLDVYLRQADIVISAVGKPRLIDKSMLCGKPYVIDIGISEIETDNGKILSGDTDFDNIKECVKFITPVKGGIGPVTVLMLMFNTIKAHLINNRMFDVLNRLEKLLEV.

NADP(+) is bound by residues 171-173, serine 198, and isoleucine 239; that span reads GRS.

It belongs to the tetrahydrofolate dehydrogenase/cyclohydrolase family. In terms of assembly, homodimer.

It catalyses the reaction (6R)-5,10-methylene-5,6,7,8-tetrahydrofolate + NADP(+) = (6R)-5,10-methenyltetrahydrofolate + NADPH. The enzyme catalyses (6R)-5,10-methenyltetrahydrofolate + H2O = (6R)-10-formyltetrahydrofolate + H(+). Its pathway is one-carbon metabolism; tetrahydrofolate interconversion. In terms of biological role, catalyzes the oxidation of 5,10-methylenetetrahydrofolate to 5,10-methenyltetrahydrofolate and then the hydrolysis of 5,10-methenyltetrahydrofolate to 10-formyltetrahydrofolate. In Borreliella burgdorferi (strain ZS7) (Borrelia burgdorferi), this protein is Bifunctional protein FolD.